The chain runs to 61 residues: Large ribosomal subunit protein eL37 (61 aa).

The Zn(2+) site is built by cysteine 19, cysteine 22, cysteine 34, and cysteine 37. A C4-type zinc finger spans residues cysteine 19–cysteine 37.

It belongs to the eukaryotic ribosomal protein eL37 family. Zn(2+) is required as a cofactor.

In terms of biological role, binds to the 23S rRNA. The chain is Large ribosomal subunit protein eL37 (rpl37e) from Sulfurisphaera tokodaii (strain DSM 16993 / JCM 10545 / NBRC 100140 / 7) (Sulfolobus tokodaii).